The chain runs to 756 residues: Protein O-mannosyl-transferase 2 (756 aa).

7 helical membrane-spanning segments follow: residues 64–84 (AHVP…TRFY), 110–130 (TFFF…AGYL), 156–176 (AFCA…VLEL), 179–199 (SSTA…CITL), 203–223 (ILLD…MVKF), 245–265 (CLSG…LVGI), and 293–313 (VFGL…IHFI). 3 MIR domains span residues 344–400 (PEYL…VKRL), 410–466 (PELV…VEVC), and 471–528 (GDPV…IEDH). 4 helical membrane-spanning segments follow: residues 602–622 (PVIW…LTVA), 643–663 (LMEG…PFYI), 672–692 (HYFP…DILL), and 713–733 (SVLL…SYGM).

It belongs to the glycosyltransferase 39 family. Widely expressed. Has particularly strong expression in ovary, testis, liver, brain, muscle, heart and eye.

Its subcellular location is the endoplasmic reticulum membrane. The catalysed reaction is a di-trans,poly-cis-dolichyl beta-D-mannosyl phosphate + L-seryl-[protein] = 3-O-(alpha-D-mannosyl)-L-seryl-[protein] + a di-trans,poly-cis-dolichyl phosphate + H(+). It carries out the reaction a di-trans,poly-cis-dolichyl beta-D-mannosyl phosphate + L-threonyl-[protein] = 3-O-(alpha-D-mannosyl)-L-threonyl-[protein] + a di-trans,poly-cis-dolichyl phosphate + H(+). Its pathway is protein modification; protein glycosylation. Transfers mannosyl residues to the hydroxyl group of serine or threonine residues. Coexpression of both POMT1 and POMT2 is necessary for enzyme activity, expression of either POMT1 or POMT2 alone is insufficient. The chain is Protein O-mannosyl-transferase 2 from Danio rerio (Zebrafish).